The following is a 144-amino-acid chain: Maximins 6/H10 (144 aa).

An N-terminal signal peptide occupies residues 1-18 (MNFKYIVAVSFLIASAYA). Positions 19–43 (RSVKNDEQSLSQRDVLDEESLREIR) are excised as a propeptide. The residue at position 70 (Asn70) is an Asparagine amide. A propeptide spanning residues 74 to 123 (TAEDHEVMKRLEAVMRDLDSLDHPEEASERETRGFNQEEIANRFTKKEKR) is cleaved from the precursor. Leu143 is subject to Leucine amide.

Belongs to the bombinin family. In terms of tissue distribution, expressed by the skin glands.

It is found in the secreted. Maximin-6 shows antimicrobial activity against bacteria and against the fungus C.albicans. It has little hemolytic activity. In terms of biological role, maximin-H10 shows antimicrobial activity against bacteria and against the fungus C.albicans. Shows strong hemolytic activity. The chain is Maximins 6/H10 from Bombina maxima (Giant fire-bellied toad).